The sequence spans 1202 residues: DNA-directed RNA polymerase subunit beta (1202 aa).

The span at 1151–1162 (LRDMDEEDDDVV) shows a compositional bias: acidic residues. The segment at 1151 to 1202 (LRDMDEEDDDVVNVDALSKYAEKQNEKTNASAEEAKAPSTESAPVETKNNQN) is disordered. Polar residues predominate over residues 1189–1202 (STESAPVETKNNQN).

The protein belongs to the RNA polymerase beta chain family. As to quaternary structure, the RNAP catalytic core consists of 2 alpha, 1 beta, 1 beta' and 1 omega subunit. When a sigma factor is associated with the core the holoenzyme is formed, which can initiate transcription.

It carries out the reaction RNA(n) + a ribonucleoside 5'-triphosphate = RNA(n+1) + diphosphate. Functionally, DNA-dependent RNA polymerase catalyzes the transcription of DNA into RNA using the four ribonucleoside triphosphates as substrates. The protein is DNA-directed RNA polymerase subunit beta of Pediococcus pentosaceus (strain ATCC 25745 / CCUG 21536 / LMG 10740 / 183-1w).